Consider the following 400-residue polypeptide: Tryptophan synthase beta chain (400 aa).

Residue Lys92 is modified to N6-(pyridoxal phosphate)lysine.

Belongs to the TrpB family. As to quaternary structure, tetramer of two alpha and two beta chains. It depends on pyridoxal 5'-phosphate as a cofactor.

The enzyme catalyses (1S,2R)-1-C-(indol-3-yl)glycerol 3-phosphate + L-serine = D-glyceraldehyde 3-phosphate + L-tryptophan + H2O. It participates in amino-acid biosynthesis; L-tryptophan biosynthesis; L-tryptophan from chorismate: step 5/5. The beta subunit is responsible for the synthesis of L-tryptophan from indole and L-serine. This Neisseria meningitidis serogroup C (strain 053442) protein is Tryptophan synthase beta chain.